The following is a 1057-amino-acid chain: uncharacterized protein (1057 aa).

This sequence belongs to the IIV-6 261R/396L/443R family.

This is an uncharacterized protein from Acheta domesticus (House cricket).